A 244-amino-acid polypeptide reads, in one-letter code: Probable transcriptional regulatory protein BT0025 (244 aa).

This sequence belongs to the TACO1 family.

The protein localises to the cytoplasm. The protein is Probable transcriptional regulatory protein BT0025 of Borrelia turicatae (strain 91E135).